A 272-amino-acid polypeptide reads, in one-letter code: Phosphate import ATP-binding protein PstB 1 (272 aa).

The 242-residue stretch at 26 to 267 (ISIENLNLFY…PMKKQTEDYI (242 aa)) folds into the ABC transporter domain. An ATP-binding site is contributed by 58 to 65 (GPSGCGKS).

Belongs to the ABC transporter superfamily. Phosphate importer (TC 3.A.1.7) family. The complex is composed of two ATP-binding proteins (PstB), two transmembrane proteins (PstC and PstA) and a solute-binding protein (PstS).

The protein resides in the cell inner membrane. The enzyme catalyses phosphate(out) + ATP + H2O = ADP + 2 phosphate(in) + H(+). Part of the ABC transporter complex PstSACB involved in phosphate import. Responsible for energy coupling to the transport system. This Vibrio parahaemolyticus serotype O3:K6 (strain RIMD 2210633) protein is Phosphate import ATP-binding protein PstB 1.